Reading from the N-terminus, the 395-residue chain is Elongation factor Tu (395 aa).

One can recognise a tr-type G domain in the interval 10–204 (KPHVNIGTIG…AVDSYIPTPE (195 aa)). The segment at 19–26 (GHVDHGKT) is G1. 19-26 (GHVDHGKT) is a binding site for GTP. Thr-26 is a Mg(2+) binding site. Residues 60 to 64 (GITIS) are G2. The tract at residues 81 to 84 (DCPG) is G3. GTP contacts are provided by residues 81-85 (DCPGH) and 136-139 (NKCD). The tract at residues 136 to 139 (NKCD) is G4. The segment at 174 to 176 (SAL) is G5.

This sequence belongs to the TRAFAC class translation factor GTPase superfamily. Classic translation factor GTPase family. EF-Tu/EF-1A subfamily. In terms of assembly, monomer.

The protein localises to the cytoplasm. The catalysed reaction is GTP + H2O = GDP + phosphate + H(+). Its function is as follows. GTP hydrolase that promotes the GTP-dependent binding of aminoacyl-tRNA to the A-site of ribosomes during protein biosynthesis. This Listeria monocytogenes serotype 4b (strain CLIP80459) protein is Elongation factor Tu.